We begin with the raw amino-acid sequence, 211 residues long: Large ribosomal subunit protein mL48 (211 aa).

A mitochondrion-targeting transit peptide spans methionine 1–arginine 27. An N6-succinyllysine modification is found at lysine 198.

Belongs to the mitochondrion-specific ribosomal protein mL48 family. In terms of assembly, component of the mitochondrial ribosome large subunit (39S) which comprises a 16S rRNA and about 50 distinct proteins. Interacts with OXA1L.

It localises to the mitochondrion. In Mus musculus (Mouse), this protein is Large ribosomal subunit protein mL48 (Mrpl48).